Consider the following 362-residue polypeptide: Histidinol-phosphate aminotransferase 2 (362 aa).

Lys222 is modified (N6-(pyridoxal phosphate)lysine).

It belongs to the class-II pyridoxal-phosphate-dependent aminotransferase family. Histidinol-phosphate aminotransferase subfamily. Homodimer. Requires pyridoxal 5'-phosphate as cofactor.

It carries out the reaction L-histidinol phosphate + 2-oxoglutarate = 3-(imidazol-4-yl)-2-oxopropyl phosphate + L-glutamate. The protein operates within amino-acid biosynthesis; L-histidine biosynthesis; L-histidine from 5-phospho-alpha-D-ribose 1-diphosphate: step 7/9. This chain is Histidinol-phosphate aminotransferase 2, found in Carboxydothermus hydrogenoformans (strain ATCC BAA-161 / DSM 6008 / Z-2901).